Consider the following 436-residue polypeptide: Methyl-accepting chemotaxis protein Amb0994 (436 aa).

Over 1–8 the chain is Cytoplasmic; it reads METTLGSY. A helical transmembrane segment spans residues 9 to 29; that stretch reads ARTLSLGMLVPSAICLLAGTF. Glycine 30 is a topological domain (periplasmic). The chain crosses the membrane as a helical span at residues 31–51; sequence LLGGSSIALWVVIAVSLLGVV. Residues 52–436 lie on the Cytoplasmic side of the membrane; that stretch reads GGVKIGGSAR…DGFIARIGGR (385 aa). The Methyl-accepting transducer domain maps to 180–416; it reads AATELEASSG…QVADAASELS (237 aa). Position 211 is a glutamate methyl ester (Gln) (glutamine 211). Glutamate 225 carries the glutamate methyl ester (Glu) modification. Residues 321 to 436 form a required for interaction with MamK and to respond to the magnetic field region; sequence TEDITSQVAH…DGFIARIGGR (116 aa).

Belongs to the methyl-accepting chemotaxis (MCP) protein family. Interacts with MamK at cell poles and septa.

The protein resides in the cell inner membrane. In terms of biological role, probable methyl-accepting taxis protein. May be the receptor that senses the torque generated from the interaction between the magnetosome dipole moment and the external magnetic field. Overproduction interferes with magnetotaxis, cells respond more slowly to changes in the magnetic field; requires the MamK-interacting C-terminus of the protein. The effect of magnetic sensing is to control flagellar rotation. Chemotactic-signal transducers respond to changes in the concentration of attractants and repellents in the environment, transduce a signal from the outside to the inside of the cell, and facilitate sensory adaptation through variation of methylation levels. Attractants increase the level of methylation while repellents decrease the level of methylation. The sequence is that of Methyl-accepting chemotaxis protein Amb0994 from Paramagnetospirillum magneticum (strain ATCC 700264 / AMB-1) (Magnetospirillum magneticum).